The sequence spans 100 residues: NADH-quinone oxidoreductase subunit K (100 aa).

The next 3 membrane-spanning stretches (helical) occupy residues 1–21 (MIGL…GLAG), 28–48 (ILLL…GFIA), and 64–84 (FIIA…ILWF).

This sequence belongs to the complex I subunit 4L family. In terms of assembly, NDH-1 is composed of 14 different subunits. Subunits NuoA, H, J, K, L, M, N constitute the membrane sector of the complex.

Its subcellular location is the cell inner membrane. It carries out the reaction a quinone + NADH + 5 H(+)(in) = a quinol + NAD(+) + 4 H(+)(out). NDH-1 shuttles electrons from NADH, via FMN and iron-sulfur (Fe-S) centers, to quinones in the respiratory chain. The immediate electron acceptor for the enzyme in this species is believed to be ubiquinone. Couples the redox reaction to proton translocation (for every two electrons transferred, four hydrogen ions are translocated across the cytoplasmic membrane), and thus conserves the redox energy in a proton gradient. The polypeptide is NADH-quinone oxidoreductase subunit K (Helicobacter pylori (strain G27)).